Here is a 214-residue protein sequence, read N- to C-terminus: Probable chemoreceptor glutamine deamidase CheD (214 aa).

The protein belongs to the CheD family.

The catalysed reaction is L-glutaminyl-[protein] + H2O = L-glutamyl-[protein] + NH4(+). Probably deamidates glutamine residues to glutamate on methyl-accepting chemotaxis receptors (MCPs), playing an important role in chemotaxis. The sequence is that of Probable chemoreceptor glutamine deamidase CheD from Vibrio vulnificus (strain YJ016).